The primary structure comprises 180 residues: Endoribonuclease YbeY (180 aa).

Zn(2+)-binding residues include His-118, His-122, and His-128.

It belongs to the endoribonuclease YbeY family. Zn(2+) serves as cofactor.

It is found in the cytoplasm. Its function is as follows. Single strand-specific metallo-endoribonuclease involved in late-stage 70S ribosome quality control and in maturation of the 3' terminus of the 16S rRNA. The sequence is that of Endoribonuclease YbeY from Rhodococcus jostii (strain RHA1).